The primary structure comprises 535 residues: MEVNVKGNYVQVYVMLPLDAVSVNNRFEKGDELRAQLRKLVEAGVDGVMVDVWWGLVEGKGPKAYDWSAYKQLFELVQKAGLKLQAIMSFHQCGGNVGDAVNIPIPQWVRDVGTRDPDIFYTDGHGTRNIEYLTLGVDNQPLFHGRSAVQMYADYMTSFRENMKDFLDAGVIVDIEVGLGPAGEMRYPSYPQSHGWSFPGIGEFICYDKYLQADFKAAAAAVGHPEWEFPNDVGQYNDTPERTQFFRDNGTYLSEKGRFFLAWYSNNLIKHGDRILDEANKVFLGYKVQLAIKISGIHWWYKVPSHAAELTAGYYNLHDRDGYRTIARMLKRHRASINFTCAEMRDLEQSSQAMSAPEELVQQVLSAGWREGLNVACENALPRYDPTAYNTILRNARPHGINQSGPPEHKLFGFTYLRLSNQLVEGQNYVNFKTFVDRMHANLPRDPYVDPMAPLPRSGPEISIEMILQAAQPKLQPFPFQEHTDLPVGPTGGMGGQAEGPTCGMGGQVKGPTGGMGGQAEDPTSGIGGELPATM.

Asp-51, His-91, and Asp-99 together coordinate substrate. Glu-184 serves as the catalytic Proton donor. Residues Lys-293, His-298, and Thr-340 each coordinate substrate. Residue Glu-378 is the Proton acceptor of the active site. Substrate is bound by residues 379–380 (NA) and Arg-418. 3 repeat units span residues 489-499 (GPTGGMGGQAE), 500-510 (GPTCGMGGQVK), and 511-521 (GPTGGMGGQAE). A 4 X 11 AA tandem repeats region spans residues 489-532 (GPTGGMGGQAEGPTCGMGGQVKGPTGGMGGQAEDPTSGIGGELP). The segment at 513-535 (TGGMGGQAEDPTSGIGGELPATM) is disordered. A 4; approximate repeat occupies 522 to 532 (DPTSGIGGELP).

The protein belongs to the glycosyl hydrolase 14 family. Monomer.

The catalysed reaction is Hydrolysis of (1-&gt;4)-alpha-D-glucosidic linkages in polysaccharides so as to remove successive maltose units from the non-reducing ends of the chains.. The chain is Beta-amylase (BMY1) from Hordeum vulgare (Barley).